A 278-amino-acid polypeptide reads, in one-letter code: Envelope glycoprotein L (278 aa).

An N-terminal signal peptide occupies residues 1–30 (MCRRPDCGFSFSPGPVVLLWCCLLLPIVSS). A gL betaherpesvirus-type domain is found at 43 to 256 (VPAECPELTR…DKYYAGLPPE (214 aa)). The cysteines at positions 154 and 159 are disulfide-linked.

The protein belongs to the herpesviridae glycoprotein L (gL) family. Betaherpesvirinae gL subfamily. Interacts with glycoprotein H (gH); this interaction is necessary for the correct processing and cell surface expression of gH. Forms the envelope pentamer complex (PC) composed of gH, gL, UL128, UL130, and UL131A. The pentamer interacts with host NRP2. Forms the envelope trimer complex composed of gH, gL, and gO. The trimer interacts with host PDGFRA. The trimer also interacts with host EPHA2.

Its subcellular location is the virion membrane. It is found in the host cell membrane. The protein localises to the host Golgi apparatus. It localises to the host trans-Golgi network. Its function is as follows. The heterodimer glycoprotein H-glycoprotein L is required for the fusion of viral and plasma membranes leading to virus entry into the host cell. Acts as a functional inhibitor of gH and maintains gH in an inhibited form. Upon binding to host integrins, gL dissociates from gH leading to activation of the viral fusion glycoproteins gB and gH. In human cytomegalovirus, forms two distincts complexes to mediate viral entry, a trimer and a pentamer at the surface of the virion envelope. The gH-gL-gO trimer is required for infection in fibroblasts by interacting with host PDGFRA, and in glioblastoma cells by interacting with host EPHA2. The gH-gL-UL128-UL130-UL131A pentamer is essential for viral entry in epithelial, endothelial and myeloid cells via interaction with host NRP2. This is Envelope glycoprotein L from Homo sapiens (Human).